The sequence spans 264 residues: PDZ domain-containing protein 9 (264 aa).

Positions 22–109 (VHNLSKTQQT…GTVLQIKVYR (88 aa)) constitute a PDZ domain.

The chain is PDZ domain-containing protein 9 (PDZD9) from Macaca fascicularis (Crab-eating macaque).